The primary structure comprises 94 residues: Large ribosomal subunit protein uL23cz (94 aa).

Belongs to the universal ribosomal protein uL23 family. As to quaternary structure, part of the 50S ribosomal subunit.

The protein resides in the plastid. The protein localises to the chloroplast. In terms of biological role, binds to 23S rRNA. The polypeptide is Large ribosomal subunit protein uL23cz (rpl23-A) (Agrostis stolonifera (Creeping bentgrass)).